We begin with the raw amino-acid sequence, 267 residues long: 5'-methylthioadenosine nucleosidase (267 aa).

The Proton acceptor role is filled by glutamate 38. S-methyl-5'-thioadenosine is bound by residues threonine 116, 199–202 (KDME), and aspartate 225. Adenine contacts are provided by lysine 199 and aspartate 225. Residue aspartate 225 is the Proton donor of the active site.

It belongs to the PNP/UDP phosphorylase family. MtnN subfamily. As to quaternary structure, homodimer. Interacts with CBL3 in a calcium-dependent manner. As to expression, expressed in roots, leaves, stems, cauline leaves and flowers.

It carries out the reaction S-methyl-5'-thioadenosine + H2O = 5-(methylsulfanyl)-D-ribose + adenine. Its pathway is amino-acid biosynthesis; L-methionine biosynthesis via salvage pathway; S-methyl-5-thio-alpha-D-ribose 1-phosphate from S-methyl-5'-thioadenosine (hydrolase route): step 1/2. With respect to regulation, inhibited by CBL3 in a calcium-dependent manner. Inhibited by 5'-methylthiotubercidin (MTT) and by formycin A (FMA). Enzyme of the methionine cycle that catalyzes the irreversible cleavage of the glycosidic bond in 5'-methylthioadenosine (MTA) to adenine and 5'-methylthioribose. Contributes to the maintenance of AdoMet homeostasis and is required to sustain high rates of ethylene synthesis. Inactive towards S-adenosylhomocysteine (SAH/AdoHcy). This chain is 5'-methylthioadenosine nucleosidase (MTN1), found in Arabidopsis thaliana (Mouse-ear cress).